A 61-amino-acid polypeptide reads, in one-letter code: Bacteriocin sakacin-P (61 aa).

Positions 1–18 (MEKFIELSLKEVTAITGG) are excised as a propeptide. Residues cysteine 27 and cysteine 32 are joined by a disulfide bond.

Belongs to the bacteriocin class IIA/YGNGV family.

The protein resides in the secreted. Bactericidal activity; inhibits closely related Lactobacilli, Listeria monocytogenes and ivanovvi, Enterococcus faecalis, Carnobacterium sp and Brocothrix thermosphacta. This is Bacteriocin sakacin-P (sakP) from Latilactobacillus sakei (Lactobacillus sakei).